The chain runs to 487 residues: Betaine aldehyde dehydrogenase (487 aa).

Residues I27 and D93 each coordinate K(+). Position 149–151 (149–151 (GAW)) interacts with NAD(+). The active-site Charge relay system is K161. NAD(+) contacts are provided by residues 175 to 178 (KPSE) and 228 to 231 (SVPT). L243 serves as a coordination point for K(+). E249 functions as the Proton acceptor in the catalytic mechanism. Positions 251, 283, and 384 each coordinate NAD(+). Residue C283 is the Nucleophile of the active site. At C283 the chain carries Cysteine sulfenic acid (-SOH). K(+) is bound by residues K454 and G457. E461 functions as the Charge relay system in the catalytic mechanism.

Belongs to the aldehyde dehydrogenase family. Dimer of dimers. It depends on K(+) as a cofactor.

It carries out the reaction betaine aldehyde + NAD(+) + H2O = glycine betaine + NADH + 2 H(+). It participates in amine and polyamine biosynthesis; betaine biosynthesis via choline pathway; betaine from betaine aldehyde: step 1/1. In terms of biological role, involved in the biosynthesis of the osmoprotectant glycine betaine. Catalyzes the irreversible oxidation of betaine aldehyde to the corresponding acid. The protein is Betaine aldehyde dehydrogenase of Brucella abortus (strain S19).